We begin with the raw amino-acid sequence, 835 residues long: Cell division control protein 48 (835 aa).

The tract at residues 1–21 (MGEEHKPLLDASGVDPREEDK) is disordered. 257–263 (PGTGKTL) provides a ligand contact to ATP. Glycyl lysine isopeptide (Lys-Gly) (interchain with G-Cter in ubiquitin) cross-links involve residues lysine 305, lysine 322, and lysine 346. ATP contacts are provided by asparagine 358 and histidine 394. 2 positions are modified to phosphoserine: serine 472 and serine 519. Lysine 522 participates in a covalent cross-link: Glycyl lysine isopeptide (Lys-Gly) (interchain with G-Cter in ubiquitin). Position 531-536 (531-536 (GTGKTL)) interacts with ATP. Residues lysine 539, lysine 594, and lysine 673 each participate in a glycyl lysine isopeptide (Lys-Gly) (interchain with G-Cter in ubiquitin) cross-link. Positions 720–729 (EAEKEVKVEG) are enriched in basic and acidic residues. The segment at 720–746 (EAEKEVKVEGEDVEMTDEGAKAEQEPE) is disordered. Threonine 735 is modified (phosphothreonine). Serine 770 is subject to Phosphoserine. The segment at 792-835 (SNFNFNDAPLGTTATDNANSNNSAPSGAGAAFGSNAEEDDDLYS) is disordered. The span at 802–826 (GTTATDNANSNNSAPSGAGAAFGSN) shows a compositional bias: low complexity.

Belongs to the AAA ATPase family. In terms of assembly, component of the heterotrimeric CDC48-NPL4-UFD1 ATPase complex. The CDC48-NPL4-UFD1 ATPase complex interacts with the HRD1 ubiquitin ligase complex composed of the E3 ligase HRD1, its cofactors HRD3, USA1 and DER1, substrate recruiting factor YOS9 and CDC48-binding protein UBX2. Interaction between the complexes is mediated by interaction between CDC48-NPL4-UFD1 complex member CDC48 and HRD1 complex member UBX2. Forms a complex composed of CDC48, NPL4, UFD1, UFD2 and SHP1. Forms a complex composed of CDC48, NPL4, UFD1, DOA1, SHP1 and deubiquitinase OTU1; within the complex interacts with DOA1/UFD3 and OTU1 to prevent multiubiquitination of substrates. Interacts with UFD2, to add further ubiquitin moieties; the interaction with UFD2 is prevented by DOA1/UFD3. Forms a complex composed of CDC48, DOA1, deubiquitinase UBP3 and probably BRE5; within the complex interacts with DOA1 and UBP3. Interacts (via C-terminus) with DOA1 (via PUL domain); the interaction is direct. Interacts with NPL4. Interacts with SHP1/UBX1, UBX2, UBX3, UBX4, UBX5, UBX6 and UBX7. Interacts with VMS1; the interaction recruits CDC48 to the mitochondria in response to mitochondrial stress. Component of the ribosome quality control complex (RQC), composed of the E3 ubiquitin ligase RKR1/LTN1, RQC1 and RQC2, as well as CDC48 and its ubiquitin-binding cofactors. RQC forms a stable complex with 60S ribosomal subunits. Interacts with ASE1 and CDC5; the interaction is likely to result in their degradation. Component of the DSCc E3 ligase complexes composed of at least TUL1, DSC2, DSC3, UBX3, CDC48 as well as VLD1 for the vacuole-localized complex or GLD1 for the Golgi/endosome-localized complex.

It is found in the microsome. The protein resides in the endoplasmic reticulum. It localises to the cytoplasm. It carries out the reaction ATP + H2O = ADP + phosphate + H(+). The first ATP-binding region has low ATPase activity. The second ATP-binding region is responsible for ATPase activity. ATP binding to the first ATP-binding region induces intrinsic activity of the second ATP-binding region. While ATP binding to the first ATP-binding region appears to prevent ATP hydrolysis by the second ATP-binding region, ADP-binding to first region promotes the coordinate and cooperative ATPase cycle of the second ATP-binding region. ATP binding to the first ATP-binding region induces a conformational change, promoting the rotation of the first ATP-binding region relative to the second ATP-binding region in the hexamer. ATP-dependent chaperone which probably uses the energy provided by ATP hydrolysis to generate mechanical force to unfold substrate proteins, disassemble protein complexes, and disaggregate protein aggregates. By recruiting and promoting the degradation of ubiquitinated proteins, plays a role in the ubiquitin fusion degradation (UFD) pathway. Has a role in the endoplasmic reticulum-associated degradation (ERAD) pathway which mediates the cytoplasmic elimination of misfolded proteins exported from the ER. Required for the proteasome-dependent processing/activation of MGA2 and SPT23 transcription factors leading to the subsequent expression of OLE1. Has an additional role in the turnover of OLE1 where it targets ubiquitinated OLE1 and other proteins to the ERAD. Regulates ubiquitin-mediated mitochondria protein degradation. Involved in spindle disassembly probably by promoting the degradation of spindle assembly factors ASE1 and CDC5 at the end of mitosis. Component of the ribosome quality control complex (RQC), a ribosome-associated complex that mediates ubiquitination and extraction of incompletely synthesized nascent chains for proteasomal degradation. CDC48 may provide the mechanical force that dislodges the polyubiquitinated nascent peptides from the exit channel. Required for ribophagy, a process which relocalizes ribosomal particles into the vacuole for degradation in response to starvation. Component of the DSC E3 ubiquitin ligase complexes that tag proteins present in Golgi, endosome and vacuole membranes and function in protein homeostasis under non-stress conditions and support a role in protein quality control. Substrate initially binds through the attached polyubiquitin chain to UDF1/NPL4 and then moves through the pore of the ATPase rings and is thereby unfolded. Acts on a broad range of even well-folded proteins via ubiquitin-binding and unfolding to initiate substrate processing. Involved in degradation of mislocalized tail-anchored transmembrane proteins extracted from the mitochondrion outer membrane by MSP1 and ubiquitinated by DOA10. This Saccharomyces cerevisiae (strain ATCC 204508 / S288c) (Baker's yeast) protein is Cell division control protein 48.